A 1781-amino-acid chain; its full sequence is Atrochrysone carboxylic acid synthase (1781 aa).

The tract at residues 15–253 (TRDLFRRLHV…KHVALPVYAG (239 aa)) is N-terminal acylcarrier protein transacylase domain (SAT). Residues 390–823 (QSKIAIVGMA…GGNTSVVVEE (434 aa)) enclose the Ketosynthase family 3 (KS3) domain. Catalysis depends on for beta-ketoacyl synthase activity residues Cys-563, His-698, and His-741. A malonyl-CoA:ACP transacylase (MAT) domain region spans residues 925 to 1244 (FAFTGQGASH…SLGLLHCAGL (320 aa)). Positions 1312–1631 (TSTVQQIIEE…RVLLNRFFSA (320 aa)) are product template (PT) domain. Residues 1316–1451 (QQIIEETFSD…ADIVYGLPTD (136 aa)) form an N-terminal hotdog fold region. The PKS/mFAS DH domain maps to 1316 to 1626 (QQIIEETFSD…FRRYPRVLLN (311 aa)). The Proton acceptor; for dehydratase activity role is filled by His-1348. A C-terminal hotdog fold region spans residues 1478–1626 (IANRLSHNMA…FRRYPRVLLN (149 aa)). The active-site Proton donor; for dehydratase activity is Asp-1537. The tract at residues 1633–1653 (DSDTSKHTSATDVSPPKKVVQ) is disordered. The Carrier domain maps to 1703–1780 (VDSDSTASKA…DLKAWLMEYY (78 aa)). Residue Ser-1740 is modified to O-(pantetheine 4'-phosphoryl)serine.

The catalysed reaction is holo-[ACP] + 8 malonyl-CoA + 8 H(+) = atrochrysone carboxyl-[ACP] + 8 CO2 + 8 CoA + 2 H2O. It participates in secondary metabolite biosynthesis. Functionally, atrochrysone carboxylic acid synthase; part of the gene cluster that mediates the biosynthesis of the dimeric xanthones cryptosporioptides. The pathway begins with the synthesis of atrochrysone thioester by the polyketide synthase dmx-nrPKS. The atrochrysone carboxyl ACP thioesterase dmxR1 then breaks the thioester bond and releases the atrochrysone carboxylic acid from dmx-nrPKS. Atrochrysone carboxylic acid is decarboxylated by the decarboxylase dmxR15, and oxidized by the anthrone oxygenase dmxR16 to yield emodin. Emodin is then reduced to emodin hydroquinone by the oxidoreductase dmxR7. A-ring reduction by the short chain dehydrogenase dmxR18, dehydration by the scytalone dehydratase-like protein dmxR17 and probable spontaneous re-oxidation, results in overall deoxygenation to chrysophanol. Baeyer-Villiger oxidation by the Baeyer-Villiger monooxygenase (BVMO) dmxR6 then yields monodictylactone in equilibrium with monodictyphenone. In the case of the cryptosporioptides biosynthesis, monodictylactone is reduced at C-12 to an alcohol (by the short chain dehydrogenases dmxR12 or dmxR8) and hydroxylated at C-5 by dmxR9, yielding the electron-rich aromatic which could eliminate H(2)O to form the ortho-quinonemethide, followed by tautomerisation to paraquinone and complete the formal reduction to produce the 10-methylgroup. Conjugate addition of C-4a-OH to the resulting paraquinone by the monooxygenase dmxR10 then gives cyclohexadienone, which is then reduced at C-5 by the short chain dehydrogenase dmxR3 to give the dihydroxanthone. The 6,7-epoxide in the cryptosporioptides could be introduced by the cytochrome P450 monooxygenase dmxL3. The highly reducing PKS dmxL2 manufactures butyrate, which is further carboxylated by dmxL1 to form ethylmalonate. It is not yet clear whether the carboxylation occurs while the butyrate is attached to the ACP of dmxL2, but this unusual fungal metabolite could then be esterified to O-5 by the O-acetyltransferase dmxR13. Finally, dimerization performed by dmxR5 gives the observed dimers cryptosporioptides A, B and C as the final products of the pathway. This Cryptosporiopsis sp. (strain 8999) protein is Atrochrysone carboxylic acid synthase.